The chain runs to 128 residues: DNA polymerase epsilon subunit 3 (128 aa).

Positions 98–110 (EKKESKASKKDSN) are enriched in basic and acidic residues. Residues 98 to 128 (EKKESKASKKDSNTAENANASATATAEEAPE) form a disordered region. A compositionally biased stretch (low complexity) spans 111–128 (TAENANASATATAEEAPE).

Homodimer. Component of the DNA polymerase epsilon complex consisting of four subunits: the catalytic subunit PolE1/DNApol-epsilon255 and the accessory subunits PolE2/DNApol-epsilon58, Chrac-14/DNApolE3 and PolE4. Component of the chromatin accessibility complex (CHRAC), composed of Chrac-14, Chrac-16, Acf and Iswi. Forms an heterodimer with Chrac-16. The Chrac-14/Chrac-16 heterodimer interacts with Acf (via N-terminus). Interacts directly with Iswi and this interaction is further stabilized by association with Chrac-16. Component of the Ada2a-containing (ATAC) complex composed of at least Ada2a, Atac1, Hcf, Ada3, Gcn5, Mocs2B, Charac-14, Atac3, Atac2, NC2beta and wds. Interacts with cid.

The protein resides in the nucleus. In terms of biological role, accessory component of the DNA polymerase epsilon complex. Participates in DNA repair and in chromosomal DNA replication. Histone-like protein which promotes nucleosome sliding of ATP-dependent nucleosome remodeling complexes. Part of the chromatin-accessibility complex (CHRAC) which uses energy/ATP to increase the general accessibility of DNA in chromatin. As a heterodimer with Chrac-16, binds DNA and facilitates nucleosome sliding by Acf. Has a role in DNA damage response by preventing cid mislocalization to chromatin. The polypeptide is DNA polymerase epsilon subunit 3 (Drosophila melanogaster (Fruit fly)).